Consider the following 427-residue polypeptide: Serine--tRNA ligase (427 aa).

L-serine is bound at residue 231-233; sequence TAE. An ATP-binding site is contributed by 262–264; sequence RSE. An L-serine-binding site is contributed by glutamate 285. 349 to 352 is an ATP binding site; sequence EISS. Residue serine 385 participates in L-serine binding.

This sequence belongs to the class-II aminoacyl-tRNA synthetase family. Type-1 seryl-tRNA synthetase subfamily. In terms of assembly, homodimer. The tRNA molecule binds across the dimer.

Its subcellular location is the cytoplasm. The enzyme catalyses tRNA(Ser) + L-serine + ATP = L-seryl-tRNA(Ser) + AMP + diphosphate + H(+). The catalysed reaction is tRNA(Sec) + L-serine + ATP = L-seryl-tRNA(Sec) + AMP + diphosphate + H(+). Its pathway is aminoacyl-tRNA biosynthesis; selenocysteinyl-tRNA(Sec) biosynthesis; L-seryl-tRNA(Sec) from L-serine and tRNA(Sec): step 1/1. In terms of biological role, catalyzes the attachment of serine to tRNA(Ser). Is also able to aminoacylate tRNA(Sec) with serine, to form the misacylated tRNA L-seryl-tRNA(Sec), which will be further converted into selenocysteinyl-tRNA(Sec). In Rhizobium leguminosarum bv. trifolii (strain WSM2304), this protein is Serine--tRNA ligase.